The chain runs to 82 residues: Photosystem I iron-sulfur center (82 aa).

2 4Fe-4S ferredoxin-type domains span residues 2 to 31 (AHSV…MVPW) and 40 to 69 (IAAA…IRVY). Residues cysteine 11, cysteine 14, cysteine 17, cysteine 21, cysteine 49, cysteine 52, cysteine 55, and cysteine 59 each contribute to the [4Fe-4S] cluster site.

As to quaternary structure, the cyanobacterial PSI reaction center is composed of one copy each of PsaA,B,C,D,E,F,I,J,K,L,M and X, and forms trimeric complexes. [4Fe-4S] cluster is required as a cofactor.

The protein resides in the cellular thylakoid membrane. The catalysed reaction is reduced [plastocyanin] + hnu + oxidized [2Fe-2S]-[ferredoxin] = oxidized [plastocyanin] + reduced [2Fe-2S]-[ferredoxin]. In terms of biological role, apoprotein for the two 4Fe-4S centers FA and FB of photosystem I (PSI); essential for photochemical activity. FB is the terminal electron acceptor of PSI, donating electrons to ferredoxin. The C-terminus interacts with PsaA/B/D and helps assemble the protein into the PSI complex. Required for binding of PsaD and PsaE to PSI. PSI is a plastocyanin/cytochrome c6-ferredoxin oxidoreductase, converting photonic excitation into a charge separation, which transfers an electron from the donor P700 chlorophyll pair to the spectroscopically characterized acceptors A0, A1, FX, FA and FB in turn. This is Photosystem I iron-sulfur center from Synechococcus sp. (strain JA-2-3B'a(2-13)) (Cyanobacteria bacterium Yellowstone B-Prime).